A 194-amino-acid polypeptide reads, in one-letter code: Cysteine and glycine-rich protein 3 (194 aa).

The interaction with TCAP stretch occupies residues Met-1–Gly-5. An LIM zinc-binding 1 domain is found at Cys-10–Cys-61. Positions Arg-64–Lys-69 match the Nuclear localization signal motif. The interaction with CLF2 stretch occupies residues Gln-94–Ser-105. Ser-95, Ser-111, and Ser-153 each carry phosphoserine. The 52-residue stretch at Cys-120 to Cys-171 folds into the LIM zinc-binding 2 domain.

As to quaternary structure, self-associates. Oligomeric in the cytoplasm and monomeric in the nucleus. Homooligomers preferentially form along the actin cytoskeleton. Interacts with TCAP. Interacts with LDHD, MYOD1, MYOG, ACTN2, NRAP, MYF6. Interacts (via N-terminus)D with GLRX3 (via C-terminus) and PPP3CA; GLRX3 and calcineurin compete for interaction with CSRP3. Interacts with CFL2; the stoichiometry influences F-actin depolymerization and possibly two molecules of CFL2 can interact with one molecule of CSRP3 resulting in the highest functional impact; the interaction is stronger with phosphorylated CFL2. Phosphorylated by PKC/PRKCA.

The protein resides in the nucleus. It localises to the cytoplasm. It is found in the cytoskeleton. Its subcellular location is the myofibril. The protein localises to the sarcomere. The protein resides in the z line. Functionally, positive regulator of myogenesis. Acts as a cofactor for myogenic bHLH transcription factors such as MYOD1, and probably MYOG and MYF6. Enhances the DNA-binding activity of the MYOD1:TCF3 isoform E47 complex and may promote formation of a functional MYOD1:TCF3 isoform E47:MEF2A complex involved in myogenesis. Plays a crucial and specific role in the organization of cytosolic structures in cardiomyocytes. Could play a role in mechanical stretch sensing. May be a scaffold protein that promotes the assembly of interacting proteins at Z-line structures. It is essential for calcineurin anchorage to the Z line. Required for stress-induced calcineurin-NFAT activation. The role in regulation of cytoskeleton dynamics by association with CFL2 is reported conflictingly. Proposed to contribute to the maintenance of muscle cell integrity through an actin-based mechanism. Can directly bind to actin filaments, cross-link actin filaments into bundles without polarity selectivity and protect them from dilution- and cofilin-mediated depolymerization; the function seems to involve its self-association. In vitro can inhibit PKC/PRKCA activity. Proposed to be involved in cardiac stress signaling by down-regulating excessive PKC/PRKCA signaling. This chain is Cysteine and glycine-rich protein 3 (Csrp3), found in Mus musculus (Mouse).